The chain runs to 585 residues: MAGUK p55 subfamily member 3 (585 aa).

L27 domains lie at 6 to 60 and 61 to 118; these read EDSG…ERQS and PTPV…FDPV. The PDZ domain maps to 137–212; sequence IVRLVKNKEP…LAQSQGSITL (76 aa). One can recognise an SH3 domain in the interval 226–296; sequence ESKVFMRALF…PSKGFQERRL (71 aa). Ser307 carries the phosphoserine modification. One can recognise a Guanylate kinase-like domain in the interval 385 to 570; that stretch reads PRLVVLIGSL…AYSQLKVVLE (186 aa).

Belongs to the MAGUK family. In terms of assembly, interacts with HTR2C; this interaction stabilizes the receptor at the plasma membrane and prevents the desensitization of the HTR2C receptor-mediated calcium response. Interacts with HTR2A. Interacts with HTR4. Interacts (via PDZ domain) with CADM1 (via C-terminus)Interacts (via PDZ domain) with CADM1; this interaction connects CADM1 with DLG1. Interacts (via Guanylate kinase-like domain) with PALS1. Interacts with DLG1 (via N-terminus); this interaction connects CADM1 with DLG1 and links CADM1 with the regulatory subunit of phosphoinositide-3-kinase (PI3K) by forming a multiprotein complex and participates in cell spreading. As to expression, expressed in retina (at protein level) at the subapical region (SAR) adjacent to adherens junctions at the OLM, and at the OPL.

It is found in the cell membrane. The protein resides in the apical cell membrane. The protein localises to the cell junction. It localises to the adherens junction. Functionally, participates in cell spreading through the phosphoinositide-3-kinase (PI3K) pathway by connecting CADM1 to DLG1 and the regulatory subunit of phosphoinositide-3-kinase (PI3K). Stabilizes HTR2C at the plasma membrane and prevents its desensitization. May participates in the maintenance of adherens junctions. The chain is MAGUK p55 subfamily member 3 from Homo sapiens (Human).